Reading from the N-terminus, the 114-residue chain is MKLSTLLVAFVLLVITVILSTPSTNAKALAESNALAVAVSEAEPWLGALFSFIRFIAPYVIRAVRVLIQVVSKVVKPAKVAMKYAKKIATNVAKDVAKDMATDIAIDTITGGDE.

The N-terminal stretch at 1–20 (MKLSTLLVAFVLLVITVILS) is a signal peptide. A propeptide spanning residues 21–44 (TPSTNAKALAESNALAVAVSEAEP) is cleaved from the precursor.

Belongs to the formicidae venom precursor-01 superfamily. As to expression, expressed by the venom gland.

The protein localises to the secreted. Its function is as follows. May have antimicrobial properties, like most ant linear peptides. This Myrmecia gulosa (Red bulldog ant) protein is U-myrmeciitoxin(01)-Mg8a.